Consider the following 405-residue polypeptide: Histone deacetylase clr6 (405 aa).

The tract at residues 6 to 318 (KKVSYFYDED…WTYETGLLAG (313 aa)) is histone deacetylase. Residue His138 is part of the active site.

It belongs to the histone deacetylase family. HD type 1 subfamily. As to quaternary structure, heterotetramer of alp13, clr6, prw1 and pst2.

The protein resides in the nucleus. The catalysed reaction is N(6)-acetyl-L-lysyl-[histone] + H2O = L-lysyl-[histone] + acetate. In terms of biological role, responsible for the deacetylation of lysine residues on the N-terminal part of the core histones (H2A, H2B, H3 and H4). Histone deacetylation gives a tag for epigenetic repression and plays an important role in transcriptional regulation, cell cycle progression and developmental events. Histone deacetylases act via the formation of large multiprotein complexes. Has a role in chromatin assembly and chromosome segregation. This chain is Histone deacetylase clr6 (clr6), found in Schizosaccharomyces pombe (strain 972 / ATCC 24843) (Fission yeast).